A 125-amino-acid chain; its full sequence is Large ribosomal subunit protein bL12 (125 aa).

It belongs to the bacterial ribosomal protein bL12 family. As to quaternary structure, homodimer. Part of the ribosomal stalk of the 50S ribosomal subunit. Forms a multimeric L10(L12)X complex, where L10 forms an elongated spine to which 2 to 4 L12 dimers bind in a sequential fashion. Binds GTP-bound translation factors.

Functionally, forms part of the ribosomal stalk which helps the ribosome interact with GTP-bound translation factors. Is thus essential for accurate translation. The chain is Large ribosomal subunit protein bL12 from Endomicrobium trichonymphae.